The sequence spans 194 residues: Ion-translocating oxidoreductase complex subunit A (194 aa).

A run of 6 helical transmembrane segments spans residues 4–24 (LVLI…QFLG), 39–59 (IGLA…SYLL), 72–92 (LRTI…EMLV), 102–122 (VLGI…VALL), 135–155 (GING…FAAM), and 172–192 (AIGL…SGLI).

It belongs to the NqrDE/RnfAE family. The complex is composed of six subunits: RnfA, RnfB, RnfC, RnfD, RnfE and RnfG.

It is found in the cell inner membrane. In terms of biological role, part of a membrane-bound complex that couples electron transfer with translocation of ions across the membrane. The polypeptide is Ion-translocating oxidoreductase complex subunit A (Azotobacter vinelandii (strain DJ / ATCC BAA-1303)).